We begin with the raw amino-acid sequence, 278 residues long: Energy-coupling factor transporter ATP-binding protein EcfA (278 aa).

The ABC transporter domain occupies 5 to 240 (LETKNLVYNY…KEVIDEADLR (236 aa)). An ATP-binding site is contributed by 38 to 45 (GHNGAGKS).

It belongs to the ABC transporter superfamily. Energy-coupling factor EcfA family. Forms a stable energy-coupling factor (ECF) transporter complex composed of 2 membrane-embedded substrate-binding proteins (S component), 2 ATP-binding proteins (A component) and 2 transmembrane proteins (T component).

The protein resides in the cell membrane. Functionally, ATP-binding (A) component of a common energy-coupling factor (ECF) ABC-transporter complex. Unlike classic ABC transporters this ECF transporter provides the energy necessary to transport a number of different substrates. The protein is Energy-coupling factor transporter ATP-binding protein EcfA of Methanosphaera stadtmanae (strain ATCC 43021 / DSM 3091 / JCM 11832 / MCB-3).